Consider the following 497-residue polypeptide: Probable malate:quinone oxidoreductase (497 aa).

It belongs to the MQO family. FAD is required as a cofactor.

It carries out the reaction (S)-malate + a quinone = a quinol + oxaloacetate. It participates in carbohydrate metabolism; tricarboxylic acid cycle; oxaloacetate from (S)-malate (quinone route): step 1/1. The polypeptide is Probable malate:quinone oxidoreductase (Tolumonas auensis (strain DSM 9187 / NBRC 110442 / TA 4)).